The primary structure comprises 417 residues: Serine hydroxymethyltransferase (417 aa).

Residues leucine 121 and glycine 125–leucine 127 contribute to the (6S)-5,6,7,8-tetrahydrofolate site. Lysine 229 carries the N6-(pyridoxal phosphate)lysine modification. Serine 354–phenylalanine 356 is a binding site for (6S)-5,6,7,8-tetrahydrofolate.

Belongs to the SHMT family. As to quaternary structure, homodimer. Pyridoxal 5'-phosphate is required as a cofactor.

The protein resides in the cytoplasm. The catalysed reaction is (6R)-5,10-methylene-5,6,7,8-tetrahydrofolate + glycine + H2O = (6S)-5,6,7,8-tetrahydrofolate + L-serine. It participates in one-carbon metabolism; tetrahydrofolate interconversion. It functions in the pathway amino-acid biosynthesis; glycine biosynthesis; glycine from L-serine: step 1/1. Its function is as follows. Catalyzes the reversible interconversion of serine and glycine with tetrahydrofolate (THF) serving as the one-carbon carrier. This reaction serves as the major source of one-carbon groups required for the biosynthesis of purines, thymidylate, methionine, and other important biomolecules. Also exhibits THF-independent aldolase activity toward beta-hydroxyamino acids, producing glycine and aldehydes, via a retro-aldol mechanism. The protein is Serine hydroxymethyltransferase of Stutzerimonas stutzeri (strain A1501) (Pseudomonas stutzeri).